The following is a 382-amino-acid chain: Nuclear hormone receptor family member nhr-106 (382 aa).

Positions glutamine 2–valine 78 form a DNA-binding region, nuclear receptor. 2 NR C4-type zinc fingers span residues cysteine 5 to cysteine 25 and cysteine 42 to cysteine 61. Positions aspartate 110 to serine 380 constitute an NR LBD domain.

This sequence belongs to the nuclear hormone receptor family.

Its subcellular location is the nucleus. In terms of biological role, orphan nuclear receptor. This chain is Nuclear hormone receptor family member nhr-106 (nhr-106), found in Caenorhabditis elegans.